We begin with the raw amino-acid sequence, 266 residues long: UPF0294 protein YafD (266 aa).

It belongs to the UPF0294 family.

The protein resides in the cytoplasm. In Salmonella typhi, this protein is UPF0294 protein YafD.